We begin with the raw amino-acid sequence, 100 residues long: Urease subunit gamma (100 aa).

Belongs to the urease gamma subunit family. Heterotrimer of UreA (gamma), UreB (beta) and UreC (alpha) subunits. Three heterotrimers associate to form the active enzyme.

It localises to the cytoplasm. The catalysed reaction is urea + 2 H2O + H(+) = hydrogencarbonate + 2 NH4(+). It participates in nitrogen metabolism; urea degradation; CO(2) and NH(3) from urea (urease route): step 1/1. This chain is Urease subunit gamma, found in Burkholderia cenocepacia (strain ATCC BAA-245 / DSM 16553 / LMG 16656 / NCTC 13227 / J2315 / CF5610) (Burkholderia cepacia (strain J2315)).